We begin with the raw amino-acid sequence, 225 residues long: Enolase-phosphatase E1 (225 aa).

It belongs to the HAD-like hydrolase superfamily. MasA/MtnC family. In terms of assembly, monomer. It depends on Mg(2+) as a cofactor.

It carries out the reaction 5-methylsulfanyl-2,3-dioxopentyl phosphate + H2O = 1,2-dihydroxy-5-(methylsulfanyl)pent-1-en-3-one + phosphate. The protein operates within amino-acid biosynthesis; L-methionine biosynthesis via salvage pathway; L-methionine from S-methyl-5-thio-alpha-D-ribose 1-phosphate: step 3/6. It participates in amino-acid biosynthesis; L-methionine biosynthesis via salvage pathway; L-methionine from S-methyl-5-thio-alpha-D-ribose 1-phosphate: step 4/6. In terms of biological role, bifunctional enzyme that catalyzes the enolization of 2,3-diketo-5-methylthiopentyl-1-phosphate (DK-MTP-1-P) into the intermediate 2-hydroxy-3-keto-5-methylthiopentenyl-1-phosphate (HK-MTPenyl-1-P), which is then dephosphorylated to form the acireductone 1,2-dihydroxy-3-keto-5-methylthiopentene (DHK-MTPene). The protein is Enolase-phosphatase E1 of Shewanella loihica (strain ATCC BAA-1088 / PV-4).